A 358-amino-acid polypeptide reads, in one-letter code: MDGFSGGIDINIFDGNSTENGSGDFEDFIEPCFMHENSDFNRIFLPTIYSFIFLLGIIGNGLVVVVMGYQKKSRTMTDKYRLHLSVADLLFVFTLPFWSVDAAIGWYFKEFLCKAVHVIYTVNLYSSVLILAFISLDRYLAIVHATNSQGSRKMLADKVVYAGVWLPALLLTVPDLVFARVSDENGQFVCDRIYPIENRETWTVGFRFLHITVGLILPGLIILICYCVIISKLSHSKGHQKRKALKTTVILILAFFACWLPYYVCLTTDTFMLLGLVKGDCIWENTLHMAISITEALAFFHCCLNPILYAFLGAKFKTSAQNAFTSVSRGSSLKILSKKRAGLSSVSTESESSSFHSS.

Residues 1-25 (MDGFSGGIDINIFDGNSTENGSGDF) form an important for chemokine binding and signaling region. Residues 1–44 (MDGFSGGIDINIFDGNSTENGSGDFEDFIEPCFMHENSDFNRIF) lie on the Extracellular side of the membrane. N-linked (GlcNAc...) asparagine glycosylation is found at Asn-16 and Asn-20. Cystine bridges form between Cys-32–Cys-281 and Cys-113–Cys-190. A helical membrane pass occupies residues 45 to 67 (LPTIYSFIFLLGIIGNGLVVVVM). The Cytoplasmic segment spans residues 68 to 81 (GYQKKSRTMTDKYR). A helical membrane pass occupies residues 82–103 (LHLSVADLLFVFTLPFWSVDAA). The interval 98 to 101 (WSVD) is chemokine binding. The Extracellular portion of the chain corresponds to 104-114 (IGWYFKEFLCK). A helical membrane pass occupies residues 115-134 (AVHVIYTVNLYSSVLILAFI). Residues 117 to 121 (HVIYT) form a chemokine binding region. At 135–158 (SLDRYLAIVHATNSQGSRKMLADK) the chain is on the cytoplasmic side. The interval 139 to 151 (YLAIVHATNSQGS) is involved in dimerization; when bound to chemokine. A helical transmembrane segment spans residues 159–178 (VVYAGVWLPALLLTVPDLVF). At 179-202 (ARVSDENGQFVCDRIYPIENRETW) the chain is on the extracellular side. Residues 190–194 (CDRIY) are chemokine binding, important for signaling. A helical membrane pass occupies residues 203 to 223 (TVGFRFLHITVGLILPGLIIL). At 224 to 248 (ICYCVIISKLSHSKGHQKRKALKTT) the chain is on the cytoplasmic side. A helical transmembrane segment spans residues 249–268 (VILILAFFACWLPYYVCLTT). The Extracellular portion of the chain corresponds to 269–289 (DTFMLLGLVKGDCIWENTLHM). Residues 290 to 309 (AISITEALAFFHCCLNPILY) form a helical membrane-spanning segment. At 310-358 (AFLGAKFKTSAQNAFTSVSRGSSLKILSKKRAGLSSVSTESESSSFHSS) the chain is on the cytoplasmic side. Residues 338 to 358 (KKRAGLSSVSTESESSSFHSS) form a disordered region. A compositionally biased stretch (low complexity) spans 344–358 (SSVSTESESSSFHSS).

Belongs to the G-protein coupled receptor 1 family. As to quaternary structure, monomer. Can form dimers. In terms of processing, sulfation is required for efficient binding of cxcl12/sdf-1alpha and promotes its dimerization. O- and N-glycosylated. In terms of tissue distribution, highly expressed in the embryonic nervous system including forebrain, hindbrain and sensory organs (including eye), and in neural crest cells. Also expressed in the dorsal lateral plate, the first site of definitive hematopoiesis in the embryo. Appears in migrating presumptive primordial germ cells (pPGCs) from stage 24. Expressed in the epidermis at stage 40. In the adult, highly expressed in the spleen with lower levels of expression in the liver and very low levels in kidney, heart, skin and brain.

It localises to the cell membrane. Its subcellular location is the cytoplasm. The protein resides in the nucleus. The protein localises to the early endosome. It is found in the late endosome. It localises to the lysosome. Its function is as follows. Receptor for the C-X-C chemokine cxcl12/sdf-1. Transduces a signal by increasing the intracellular level of calcium ions. Signaling with cxcl12/sdf-1 mediates the directional movement of mesodermal cells during gastrulation. May play a role in the migration of embryonic presumptive primordial germ cells (pPGCs). May also be involved in regulating the migration of hematopoietic stem cells into the larval liver. The polypeptide is C-X-C chemokine receptor type 4-A (cxcr4-a) (Xenopus laevis (African clawed frog)).